We begin with the raw amino-acid sequence, 388 residues long: Alanine racemase (388 aa).

Lysine 44 functions as the Proton acceptor; specific for D-alanine in the catalytic mechanism. Position 44 is an N6-(pyridoxal phosphate)lysine (lysine 44). Arginine 142 provides a ligand contact to substrate. The active-site Proton acceptor; specific for L-alanine is tyrosine 273. Residue methionine 321 participates in substrate binding.

This sequence belongs to the alanine racemase family. The cofactor is pyridoxal 5'-phosphate.

It catalyses the reaction L-alanine = D-alanine. The protein operates within amino-acid biosynthesis; D-alanine biosynthesis; D-alanine from L-alanine: step 1/1. Catalyzes the interconversion of L-alanine and D-alanine. May also act on other amino acids. The chain is Alanine racemase (alr) from Mycobacterium avium (strain 104).